Here is a 345-residue protein sequence, read N- to C-terminus: Uroporphyrinogen decarboxylase (345 aa).

Substrate-binding positions include 27–31, phenylalanine 46, aspartate 76, tyrosine 152, serine 207, and histidine 321; that span reads RQAGR.

Belongs to the uroporphyrinogen decarboxylase family. Homodimer.

Its subcellular location is the cytoplasm. The catalysed reaction is uroporphyrinogen III + 4 H(+) = coproporphyrinogen III + 4 CO2. The protein operates within porphyrin-containing compound metabolism; protoporphyrin-IX biosynthesis; coproporphyrinogen-III from 5-aminolevulinate: step 4/4. Catalyzes the decarboxylation of four acetate groups of uroporphyrinogen-III to yield coproporphyrinogen-III. This chain is Uroporphyrinogen decarboxylase, found in Staphylococcus aureus (strain MRSA252).